The following is a 422-amino-acid chain: Enolase (422 aa).

Gln162 contacts (2R)-2-phosphoglycerate. Glu204 (proton donor) is an active-site residue. The Mg(2+) site is built by Asp241, Glu284, and Asp311. Residues Lys336, Arg365, Ser366, and Lys387 each contribute to the (2R)-2-phosphoglycerate site. Catalysis depends on Lys336, which acts as the Proton acceptor.

It belongs to the enolase family. Component of the RNA degradosome, a multiprotein complex involved in RNA processing and mRNA degradation. Requires Mg(2+) as cofactor.

The protein localises to the cytoplasm. It localises to the secreted. It is found in the cell surface. The catalysed reaction is (2R)-2-phosphoglycerate = phosphoenolpyruvate + H2O. It participates in carbohydrate degradation; glycolysis; pyruvate from D-glyceraldehyde 3-phosphate: step 4/5. In terms of biological role, catalyzes the reversible conversion of 2-phosphoglycerate (2-PG) into phosphoenolpyruvate (PEP). It is essential for the degradation of carbohydrates via glycolysis. This chain is Enolase, found in Legionella pneumophila (strain Paris).